The following is a 366-amino-acid chain: MGDPTLRTDLGRVLVTGGSGFVGANLVTTLLERGHEVRSFDRVPSPLPAHPKLTTVVGDITNGEDVATAVAGIDTIFHTAAIIDLMGGATVTEEYRQRSFSVNVEGTKNLVHAGQQAGVQRFVYTASNSVVMGGQDIVNGDETLPYTTRFNDLYTETKVVAEKFVLGQNGEQGMLTCSIRPSGIWGRGDQTMFRKVFENVLAGHVKVLVGSKNIKLDNSYVHNLIHGFILAAEHLVPGGTAPGQAYFINDGEPLNMFEFARPVVVACGRKLPNIRVSGRLVHKAMMGWQWLHFKYGIREPLVEPLAVERLYLNNYFSIAKARRDLGYEPLFTTEQAMAECLPYYTDLFDTMVAQGAQPAVAAAPKS.

Tyr154 acts as the Proton donor in catalysis.

The protein belongs to the 3-beta-HSD family.

The enzyme catalyses testosterone + NAD(+) = androst-4-ene-3,17-dione + NADH + H(+). It catalyses the reaction testosterone + NADP(+) = androst-4-ene-3,17-dione + NADPH + H(+). In terms of biological role, catalyzes the degradation of testosterone into androstenedione. This Mycolicibacterium neoaurum (Mycobacterium neoaurum) protein is 3-beta-hydroxysteroid dehydrogenase.